We begin with the raw amino-acid sequence, 206 residues long: Pyridoxine/pyridoxamine 5'-phosphate oxidase (206 aa).

Residues 49–54, 69–70, Lys-76, and Gln-98 contribute to the FMN site; these read RMVLLK and YT. Lys-54 contacts substrate. Positions 116, 120, and 124 each coordinate substrate. FMN contacts are provided by residues 133-134 and Trp-177; that span reads QS. 183-185 lines the substrate pocket; that stretch reads RLH. Arg-187 is an FMN binding site.

This sequence belongs to the pyridoxamine 5'-phosphate oxidase family. In terms of assembly, homodimer. The cofactor is FMN.

It carries out the reaction pyridoxamine 5'-phosphate + O2 + H2O = pyridoxal 5'-phosphate + H2O2 + NH4(+). The enzyme catalyses pyridoxine 5'-phosphate + O2 = pyridoxal 5'-phosphate + H2O2. It participates in cofactor metabolism; pyridoxal 5'-phosphate salvage; pyridoxal 5'-phosphate from pyridoxamine 5'-phosphate: step 1/1. It functions in the pathway cofactor metabolism; pyridoxal 5'-phosphate salvage; pyridoxal 5'-phosphate from pyridoxine 5'-phosphate: step 1/1. Catalyzes the oxidation of either pyridoxine 5'-phosphate (PNP) or pyridoxamine 5'-phosphate (PMP) into pyridoxal 5'-phosphate (PLP). In Jannaschia sp. (strain CCS1), this protein is Pyridoxine/pyridoxamine 5'-phosphate oxidase.